Reading from the N-terminus, the 177-residue chain is Ferritin, heavy subunit (177 aa).

The Ferritin-like diiron domain occupies 7–156; the sequence is QNFHQDCEAA…DWVTNLRRMG (150 aa). Residues Glu-24, Glu-59, His-62, Glu-104, and Gln-138 each contribute to the Fe cation site.

It belongs to the ferritin family. In terms of assembly, oligomer of 24 subunits. There are at least two types of subunits. The functional molecule forms a roughly spherical shell with a diameter of 12 nm and contains a central cavity into which the insoluble mineral iron core is deposited. In terms of tissue distribution, liver, gonads, head kidney, heart and spleen.

It catalyses the reaction 4 Fe(2+) + O2 + 4 H(+) = 4 Fe(3+) + 2 H2O. In terms of biological role, stores iron in a soluble, non-toxic, readily available form. Important for iron homeostasis. Has ferroxidase activity. Iron is taken up in the ferrous form and deposited as ferric hydroxides after oxidation. This chain is Ferritin, heavy subunit, found in Salmo salar (Atlantic salmon).